We begin with the raw amino-acid sequence, 277 residues long: MTPATPLNLLISNDDGISALGIRTLANTLAEAGHQVTVVCPDRERSATGHGLTLHRPIRTEIVEGIFDPRVTAWSCSGTPSDCVKFALSAVLKERPDFVLSGINHGSNLGTDVLYSGTVSAAMEGLLEGIHSIALSLADYTSHNFQPAADFAVKLLCQLMEKRPHWAIANQDAPVLLNINVPNLEKEKLAGVKITRQGLRRYIEQFQKRQDPRGKTYYWLSGEVIEELPQPDEPNIPLDFPTDVQAIAAGYITITPLQYIMNDLHRIQTLAQEDWQI.

A divalent metal cation is bound by residues Asp14, Asp15, Ser46, and Asn104.

It belongs to the SurE nucleotidase family. Requires a divalent metal cation as cofactor.

The protein localises to the cytoplasm. It catalyses the reaction a ribonucleoside 5'-phosphate + H2O = a ribonucleoside + phosphate. Functionally, nucleotidase that shows phosphatase activity on nucleoside 5'-monophosphates. This chain is 5'-nucleotidase SurE, found in Picosynechococcus sp. (strain ATCC 27264 / PCC 7002 / PR-6) (Agmenellum quadruplicatum).